The primary structure comprises 262 residues: Acyl-[acyl-carrier-protein]--UDP-N-acetylglucosamine O-acyltransferase (262 aa).

The protein belongs to the transferase hexapeptide repeat family. LpxA subfamily. Homotrimer.

It is found in the cytoplasm. It catalyses the reaction a (3R)-hydroxyacyl-[ACP] + UDP-N-acetyl-alpha-D-glucosamine = a UDP-3-O-[(3R)-3-hydroxyacyl]-N-acetyl-alpha-D-glucosamine + holo-[ACP]. Its pathway is glycolipid biosynthesis; lipid IV(A) biosynthesis; lipid IV(A) from (3R)-3-hydroxytetradecanoyl-[acyl-carrier-protein] and UDP-N-acetyl-alpha-D-glucosamine: step 1/6. Involved in the biosynthesis of lipid A, a phosphorylated glycolipid that anchors the lipopolysaccharide to the outer membrane of the cell. This is Acyl-[acyl-carrier-protein]--UDP-N-acetylglucosamine O-acyltransferase from Erwinia tasmaniensis (strain DSM 17950 / CFBP 7177 / CIP 109463 / NCPPB 4357 / Et1/99).